We begin with the raw amino-acid sequence, 399 residues long: MAGNKSVVYHGTRDLRVETVPYPKLEHNNRKLEHAVILKVVSTNICGSDQHIYRGRFIVPKGHVLGHEITGEVVEKGSDVELMDIGDLVSVPFNVACGRCRNCKEARSDVCENNLVNPDADLGAFGFDLKGWSGGQAEYVLVPYADYMLLKFGDKEQAMEKIKDLTLISDILPTGFHGCVSAGVKPGSHVYIAGAGPVGRCAAAGARLLGAACVIVGDQNPERLKLLSDAGFETIDLRNSAPLRDQIDQILGKPEVDCGVDAVGFEAHGLGDEANTETPNGALNSLFDVVRAGGAIGIPGIYVGSDPDPVNKDAGSGRLHLDFGKMWTKSIRIMTGMAPVTNYNRHLTEAILWDQMPYLSKVMNIEVITLDQAPDGYAKFDKGSPAKFVIDPHGMLKNK.

C46 contacts Zn(2+). 47 to 51 is a binding site for NAD(+); that stretch reads GSDQH. Zn(2+) is bound by residues H67, C97, C100, C103, C111, and D170. NAD(+) is bound at residue T174. H177 provides a ligand contact to Zn(2+). Residues 197–198, 218–219, R223, V263, H268, P299, 299–301, and 336–338 contribute to the NAD(+) site; these read PV, DQ, PGI, and GMA.

Belongs to the zinc-containing alcohol dehydrogenase family. Homotetramer. Zn(2+) serves as cofactor. It depends on NAD(+) as a cofactor. The cofactor is NADH.

It catalyses the reaction 2 formaldehyde + H2O = methanol + formate + H(+). Inhibited by the substrate analog pyrazole but not by NAD analogs such as AMP, ADP, ATP or N-methylnicotinamide chloride. Active against a range of primary alcohols as well as some secondary alcohols. Exhibits higher activity against alcohols with longer carbon chains. The polypeptide is Formaldehyde dismutase (Pseudomonas putida (Arthrobacter siderocapsulatus)).